Reading from the N-terminus, the 254-residue chain is Methyl-CpG-binding domain-containing protein 11 (254 aa).

An MBD domain is found at 4–74 (EEEVVSVELP…AEFDWTTSGT (71 aa)). A disordered region spans residues 56–254 (KSHPGNPAIA…EKTAEGEATG (199 aa)). 4 stretches are compositionally biased toward basic and acidic residues: residues 80-97 (RISEKTKATPSPDKEPPK), 107-130 (SKKDAEGEKSEGGGEENSHVKDTE), 151-162 (ETERVNDAKENI), and 178-254 (ESMK…EATG). Serine 116 bears the Phosphoserine mark.

Expressed in leaves (around hydathodes), buds, flowers (carpels and pollen grains), stems (around nodes), siliques, mature seeds and roots.

It localises to the nucleus. In terms of biological role, transcriptional regulator that binds DNA independently of its methylation status. Required during plant organogenesis and development. The sequence is that of Methyl-CpG-binding domain-containing protein 11 (MBD11) from Arabidopsis thaliana (Mouse-ear cress).